We begin with the raw amino-acid sequence, 345 residues long: Holliday junction branch migration complex subunit RuvB (345 aa).

The interval 1–182 (MDQRIIASSS…FGIVQRLEFY (182 aa)) is large ATPase domain (RuvB-L). Residues isoleucine 21, arginine 22, glycine 63, lysine 66, threonine 67, threonine 68, 129–131 (EDF), arginine 172, tyrosine 182, and arginine 219 contribute to the ATP site. Threonine 67 contributes to the Mg(2+) binding site. Residues 183–253 (SPQELTRIVI…VAQAAMQMLK (71 aa)) are small ATPAse domain (RuvB-S). Positions 256–345 (PEGFDELDRR…PGIGEPGDLF (90 aa)) are head domain (RuvB-H). Residues arginine 292, arginine 311, and arginine 316 each contribute to the DNA site.

This sequence belongs to the RuvB family. Homohexamer. Forms an RuvA(8)-RuvB(12)-Holliday junction (HJ) complex. HJ DNA is sandwiched between 2 RuvA tetramers; dsDNA enters through RuvA and exits via RuvB. An RuvB hexamer assembles on each DNA strand where it exits the tetramer. Each RuvB hexamer is contacted by two RuvA subunits (via domain III) on 2 adjacent RuvB subunits; this complex drives branch migration. In the full resolvosome a probable DNA-RuvA(4)-RuvB(12)-RuvC(2) complex forms which resolves the HJ.

The protein resides in the cytoplasm. It catalyses the reaction ATP + H2O = ADP + phosphate + H(+). The RuvA-RuvB-RuvC complex processes Holliday junction (HJ) DNA during genetic recombination and DNA repair, while the RuvA-RuvB complex plays an important role in the rescue of blocked DNA replication forks via replication fork reversal (RFR). RuvA specifically binds to HJ cruciform DNA, conferring on it an open structure. The RuvB hexamer acts as an ATP-dependent pump, pulling dsDNA into and through the RuvAB complex. RuvB forms 2 homohexamers on either side of HJ DNA bound by 1 or 2 RuvA tetramers; 4 subunits per hexamer contact DNA at a time. Coordinated motions by a converter formed by DNA-disengaged RuvB subunits stimulates ATP hydrolysis and nucleotide exchange. Immobilization of the converter enables RuvB to convert the ATP-contained energy into a lever motion, pulling 2 nucleotides of DNA out of the RuvA tetramer per ATP hydrolyzed, thus driving DNA branch migration. The RuvB motors rotate together with the DNA substrate, which together with the progressing nucleotide cycle form the mechanistic basis for DNA recombination by continuous HJ branch migration. Branch migration allows RuvC to scan DNA until it finds its consensus sequence, where it cleaves and resolves cruciform DNA. The polypeptide is Holliday junction branch migration complex subunit RuvB (Xanthomonas oryzae pv. oryzae (strain MAFF 311018)).